Here is a 458-residue protein sequence, read N- to C-terminus: uncharacterized protein (458 aa).

A run of 12 helical transmembrane segments spans residues 26-46 (LIAIGGAIGTGLFLGSGKSIH), 47-67 (FAGPSILFAYMITGIICFLIM), 95-115 (AAFITGWTYWFCWISIAMADL), 125-145 (WLPGVPQWVPGLIALIILLIM), 160-180 (FALIKVIAILALIVIGLVMIF), 208-228 (GFILSFQMVVFAFVGIELVGL), 251-271 (VLLFYIGALLVIMSIYPWDII), 278-298 (FVQVFVAVGIVGAASIINFVV), 342-362 (ALFFSAIVILIGVTLNYIMPE), 365-385 (FTLITSISTVCFIYIWGITVI), 409-429 (PFTNYLILAFLAFVLVVLALA), and 432-452 (TRVSLFVTPVWFILLIVIYKV).

This sequence belongs to the amino acid-polyamine-organocation (APC) superfamily.

It is found in the cell membrane. Functionally, probable amino-acid or metabolite transport protein. This is an uncharacterized protein from Bacillus subtilis (strain 168).